The primary structure comprises 558 residues: Putative polypeptide N-acetylgalactosaminyltransferase 13 (558 aa).

At Met-1–His-12 the chain is on the cytoplasmic side. The helical; Signal-anchor for type II membrane protein transmembrane segment at Cys-13–Ile-32 threads the bilayer. Over Arg-33–Thr-558 the chain is Lumenal. N-linked (GlcNAc...) asparagine glycosylation is found at Asn-48 and Asn-111. Intrachain disulfides connect Cys-97-Cys-335, Cys-326-Cys-412, Cys-445-Cys-460, and Cys-484-Cys-498. Residues Glu-109 to Arg-225 form a catalytic subdomain A region. Residues Asp-150 and Arg-186 each contribute to the substrate site. Residue Asp-209 coordinates Mn(2+). Ser-210 is a binding site for substrate. His-211 provides a ligand contact to Mn(2+). Residues Pro-281 to Arg-343 are catalytic subdomain B. Position 312 (Trp-312) interacts with substrate. Residue His-340 coordinates Mn(2+). Residues Arg-343 and His-346 each contribute to the substrate site. Positions Val-422 to Gly-556 constitute a Ricin B-type lectin domain. An N-linked (GlcNAc...) asparagine glycan is attached at Asn-501. Cys-525 and Cys-539 form a disulfide bridge.

It belongs to the glycosyltransferase 2 family. GalNAc-T subfamily. Mn(2+) serves as cofactor. In terms of tissue distribution, during embryonic stages 16-17, very weak expression in the midgut.

It localises to the golgi apparatus membrane. The catalysed reaction is L-seryl-[protein] + UDP-N-acetyl-alpha-D-galactosamine = a 3-O-[N-acetyl-alpha-D-galactosaminyl]-L-seryl-[protein] + UDP + H(+). The enzyme catalyses L-threonyl-[protein] + UDP-N-acetyl-alpha-D-galactosamine = a 3-O-[N-acetyl-alpha-D-galactosaminyl]-L-threonyl-[protein] + UDP + H(+). It participates in protein modification; protein glycosylation. May catalyze the initial reaction in O-linked oligosaccharide biosynthesis, the transfer of an N-acetyl-D-galactosamine residue to a serine or threonine residue on the protein receptor. The chain is Putative polypeptide N-acetylgalactosaminyltransferase 13 (pgant13) from Drosophila melanogaster (Fruit fly).